Consider the following 182-residue polypeptide: Aralkylamine dehydrogenase light chain (182 aa).

Residues 1 to 47 (MRWLDKFGESLSRSVAHKTSRRSVLRSVGKLMVGSAFVLPVLPVARA) constitute a signal peptide (tat-type signal). Cystine bridges form between cysteine 75–cysteine 140, cysteine 81–cysteine 113, cysteine 88–cysteine 171, cysteine 90–cysteine 138, cysteine 91–cysteine 135, cysteine 98–cysteine 129, and cysteine 130–cysteine 161. Aspartate 84 lines the substrate pocket. Tryptophan 109 (tryptophylquinone 6'-substrate hemiaminal intermediate) is an active-site residue. The residue at position 109 (tryptophan 109) is a Tryptophylquinone. The segment at residues 109–160 (WIGTCHNPHDGKDYLISYHDCCGKTACGRCQCNTQTRERPGYEFFLHNDVNW) is a cross-link (tryptophan tryptophylquinone (Trp-Trp)). The Proton acceptor role is filled by aspartate 128. Position 156–158 (156–158 (NDV)) interacts with substrate.

It belongs to the aromatic amine dehydrogenase light chain family. In terms of assembly, heterotetramer of two light and two heavy chains. Binds two azurin molecules per heterotetramer. It depends on tryptophan tryptophylquinone residue as a cofactor. Tryptophan tryptophylquinone (TTQ) is formed by oxidation of the indole ring of a tryptophan to form tryptophylquinone followed by covalent cross-linking with another tryptophan residue. Post-translationally, predicted to be exported by the Tat system. The position of the signal peptide cleavage has been experimentally proven.

It localises to the periplasm. The enzyme catalyses an aralkylamine + 2 oxidized [azurin] + H2O = an aromatic aldehyde + 2 reduced [azurin] + NH4(+) + 2 H(+). With respect to regulation, irreversibly inhibited by phenylhydrazine, hydroxylamine, semicarbazide, hydrazine and aminoguanidine. Reversibly inhibited by isonicotinic acid hydrazide (isoniazid) and isonicotinic acid 2-isopropyl hydrazide (iproniazid). Functionally, oxidizes primary aromatic amines and, more slowly, some long-chain aliphatic amines, but not methylamine or ethylamine. Uses azurin as an electron acceptor to transfer electrons from the reduced tryptophylquinone cofactor. The polypeptide is Aralkylamine dehydrogenase light chain (Alcaligenes faecalis).